A 199-amino-acid polypeptide reads, in one-letter code: MANRGPSYGSSREVQEKIEQKYDADLENKLVDWIILQCAEDIEHPPPGRAHFQKWLMDGTVLCKLINSLYPPGQEPIPKISESKMAFKQMEQISQFLKAAETYGVRTTDIFQTVDLWEGKDMAAVQRTLMALGSVAVTKDDGCYRGEPSWFHRKAQQNRRGFSEEQLRQGQNVIGLQMGSNKGASQAGMTGYGMPRQIM.

Positions 24–136 (ADLENKLVDW…RTLMALGSVA (113 aa)) constitute a Calponin-homology (CH) domain. Residue serine 163 is modified to Phosphoserine. The Calponin-like repeat unit spans residues 174–199 (IGLQMGSNKGASQAGMTGYGMPRQIM). Residues 176–188 (LQMGSNKGASQAG) show a composition bias toward polar residues. The disordered stretch occupies residues 176-199 (LQMGSNKGASQAGMTGYGMPRQIM).

It belongs to the calponin family.

The chain is Transgelin-3 (TAGLN3) from Pongo abelii (Sumatran orangutan).